Reading from the N-terminus, the 548-residue chain is CTP synthase (548 aa).

An amidoligase domain region spans residues 1-270; the sequence is MTKYVFVTGG…DNIVCEALGL (270 aa). Residue serine 13 participates in CTP binding. Serine 13 lines the UTP pocket. ATP contacts are provided by residues 14–19 and aspartate 71; that span reads SLGKGI. Mg(2+) contacts are provided by aspartate 71 and glutamate 144. Residues 151-153, 191-196, and lysine 227 contribute to the CTP site; these read DIE and KTKPTQ. UTP is bound by residues 191-196 and lysine 227; that span reads KTKPTQ. A Glutamine amidotransferase type-1 domain is found at 295–545; it reads TIGMVGKYVD…IEAAIANHAR (251 aa). Glycine 356 provides a ligand contact to L-glutamine. Cysteine 383 (nucleophile; for glutamine hydrolysis) is an active-site residue. L-glutamine-binding positions include 384–387, glutamate 407, and arginine 473; that span reads LGMQ. Active-site residues include histidine 518 and glutamate 520.

The protein belongs to the CTP synthase family. As to quaternary structure, homotetramer.

It catalyses the reaction UTP + L-glutamine + ATP + H2O = CTP + L-glutamate + ADP + phosphate + 2 H(+). It carries out the reaction L-glutamine + H2O = L-glutamate + NH4(+). The catalysed reaction is UTP + NH4(+) + ATP = CTP + ADP + phosphate + 2 H(+). Its pathway is pyrimidine metabolism; CTP biosynthesis via de novo pathway; CTP from UDP: step 2/2. Its activity is regulated as follows. Allosterically activated by GTP, when glutamine is the substrate; GTP has no effect on the reaction when ammonia is the substrate. The allosteric effector GTP functions by stabilizing the protein conformation that binds the tetrahedral intermediate(s) formed during glutamine hydrolysis. Inhibited by the product CTP, via allosteric rather than competitive inhibition. Catalyzes the ATP-dependent amination of UTP to CTP with either L-glutamine or ammonia as the source of nitrogen. Regulates intracellular CTP levels through interactions with the four ribonucleotide triphosphates. The polypeptide is CTP synthase (Bordetella petrii (strain ATCC BAA-461 / DSM 12804 / CCUG 43448)).